The sequence spans 660 residues: Probable E3 ubiquitin ligase complex SCF subunit sconB (660 aa).

Basic and acidic residues predominate over residues 1 to 13 (MHNENSVLRDAKE). Disordered regions lie at residues 1 to 34 (MHNENSVLRDAKESLFNPTPRKQGLPEDNTMTPY) and 86 to 108 (LGTGISKSAGPPPRPDLKCRRQA). Residues 175–221 (IDFITALPPEISFKILSYLDTASLCRAAQVSRGWKCLADDDVVWHRM) enclose the F-box domain. WD repeat units lie at residues 340 to 379 (GHTNGVMCLQFEDNILATGSYDTTIKIWDMETGEELRTLT), 381 to 419 (HTSGIRCLQFDETKLISGSIDRTLKVWNWRTGECISTYT), 421 to 457 (HLGGIIGLHFQNSILASGSTDKTVKIWNFEDKSTFLL), 459 to 500 (GHSD…RTFQ), 542 to 586 (SQVS…CLRT), 587 to 626 (FFGHLEGVWALSADTLRIVSGAEDRMVKIWDPRTGKCERT), and 629 to 660 (GHSGPVTCVGLGDSCFVTGSEDCEVRIYSFKN). The tract at residues 521–553 (GHDASHEEDSNASVSGDESPSSQVSCSPTAAFF) is disordered. Positions 531–548 (NASVSGDESPSSQVSCSP) are enriched in polar residues.

It belongs to the WD repeat MET30/SCONB/SCON-2 family. In terms of assembly, component of the SCF(sconB) E3 ubiquitin ligase complex.

The protein operates within protein modification; protein ubiquitination. Component of the SCF(sconB) E3 ubiquitin ligase complex involved in the regulation of sulfur metabolite repression, probably by mediating the inactivation or degradation of the metR transcription factor. This Talaromyces marneffei (strain ATCC 18224 / CBS 334.59 / QM 7333) (Penicillium marneffei) protein is Probable E3 ubiquitin ligase complex SCF subunit sconB (sconB).